Here is a 456-residue protein sequence, read N- to C-terminus: Kynurenine 3-monooxygenase (456 aa).

Belongs to the aromatic-ring hydroxylase family. KMO subfamily. FAD is required as a cofactor.

It carries out the reaction L-kynurenine + NADPH + O2 + H(+) = 3-hydroxy-L-kynurenine + NADP(+) + H2O. It participates in cofactor biosynthesis; NAD(+) biosynthesis; quinolinate from L-kynurenine: step 1/3. Catalyzes the hydroxylation of L-kynurenine (L-Kyn) to form 3-hydroxy-L-kynurenine (L-3OHKyn). Required for synthesis of quinolinic acid. The polypeptide is Kynurenine 3-monooxygenase (Xanthomonas campestris pv. campestris (strain 8004)).